The primary structure comprises 131 residues: Serum amyloid A-3 protein (131 aa).

Residues 1–18 (MNLSTGIIFCFLILGVSS) form the signal peptide. Positions 94–105 (MTRDQVREDSKA) are enriched in basic and acidic residues. The segment at 94–131 (MTRDQVREDSKADQFANEWGRSGKDPNHFRPAGLPDKY) is disordered.

Belongs to the SAA family. In terms of tissue distribution, expressed in the liver. Expressed in mammary epithelial cells. Expressed at high levels in mammary ductal cells and vesicle engorged alveoli, but absent from stromal and connective tissue and leukocytes. Secreted into colostrum and mastitic milk (at protein level). Low expression levels, if any, in normal milk (at protein level).

Its subcellular location is the secreted. Major acute phase reactant. Apolipoprotein of the HDL complex. May have a role in protection of the mammary gland during remodeling and infection. In vitro exhibits antimicrobial activity against Escherichia coli, Streptococcus uberis and Pseudomonas aeruginosa. This chain is Serum amyloid A-3 protein (SAA3), found in Bos taurus (Bovine).